The sequence spans 568 residues: Protein adenylyltransferase SelO, mitochondrial (568 aa).

ATP contacts are provided by Gly-120, Gly-122, Arg-123, Lys-144, Asp-156, Gly-157, Arg-208, and Arg-215. Catalysis depends on Asp-287, which acts as the Proton acceptor. 2 residues coordinate Mg(2+): Asn-288 and Asp-297. Position 297 (Asp-297) interacts with ATP.

It belongs to the SELO family. Requires Mg(2+) as cofactor. In terms of processing, forms probably one or more intrachain disulfide bridges.

It localises to the mitochondrion. The catalysed reaction is L-tyrosyl-[protein] + ATP = O-(5'-adenylyl)-L-tyrosyl-[protein] + diphosphate. Functionally, catalyzes the transfer of adenosine 5'-monophosphate (AMP) to Tyr residues of target mitochondrial proteins (AMPylation). Involved in redox homeostasis by regulating the cellular response to oxidative stress. Regulates protein S-glutathionylation levels possibly by AMPylation of deglutathionylation enzymes such as glutaredoxins. The polypeptide is Protein adenylyltransferase SelO, mitochondrial (Schizosaccharomyces pombe (strain 972 / ATCC 24843) (Fission yeast)).